Reading from the N-terminus, the 438-residue chain is Ribosomal protein uS12 methylthiotransferase RimO (438 aa).

The MTTase N-terminal domain maps to 4–114 (PRVSFVSLGC…VMNAVHEVAP (111 aa)). [4Fe-4S] cluster-binding residues include Cys-13, Cys-49, Cys-78, Cys-146, Cys-150, and Cys-153. A Radical SAM core domain is found at 132–370 (LTPRHYAYLK…MAKQQQISTN (239 aa)). A TRAM domain is found at 373 to 438 (KKKVGKRLPV…DAYDLHGTAV (66 aa)).

It belongs to the methylthiotransferase family. RimO subfamily. [4Fe-4S] cluster serves as cofactor.

The protein resides in the cytoplasm. It catalyses the reaction L-aspartate(89)-[ribosomal protein uS12]-hydrogen + (sulfur carrier)-SH + AH2 + 2 S-adenosyl-L-methionine = 3-methylsulfanyl-L-aspartate(89)-[ribosomal protein uS12]-hydrogen + (sulfur carrier)-H + 5'-deoxyadenosine + L-methionine + A + S-adenosyl-L-homocysteine + 2 H(+). Catalyzes the methylthiolation of an aspartic acid residue of ribosomal protein uS12. The sequence is that of Ribosomal protein uS12 methylthiotransferase RimO from Brucella ovis (strain ATCC 25840 / 63/290 / NCTC 10512).